A 299-amino-acid polypeptide reads, in one-letter code: Glycine--tRNA ligase alpha subunit (299 aa).

Belongs to the class-II aminoacyl-tRNA synthetase family. Tetramer of two alpha and two beta subunits.

Its subcellular location is the cytoplasm. The catalysed reaction is tRNA(Gly) + glycine + ATP = glycyl-tRNA(Gly) + AMP + diphosphate. The chain is Glycine--tRNA ligase alpha subunit from Dictyoglomus turgidum (strain DSM 6724 / Z-1310).